Reading from the N-terminus, the 536-residue chain is Quinate permease (536 aa).

The Cytoplasmic segment spans residues methionine 1 to alanine 26. The chain crosses the membrane as a helical span at residues isoleucine 27–alanine 47. Residues leucine 48 to serine 74 lie on the Extracellular side of the membrane. The helical transmembrane segment at valine 75–glycine 95 threads the bilayer. Residues arginine 96–lysine 98 are Cytoplasmic-facing. Residues serine 99 to glycine 119 form a helical membrane-spanning segment. Topologically, residues glutamine 120–arginine 131 are extracellular. Residues valine 132 to leucine 152 form a helical membrane-spanning segment. Topologically, residues alanine 153–arginine 160 are cytoplasmic. The chain crosses the membrane as a helical span at residues leucine 161–tyrosine 181. Over glycine 182–leucine 195 the chain is Extracellular. Asparagine 184 carries an N-linked (GlcNAc...) asparagine glycan. A helical membrane pass occupies residues isoleucine 196–proline 216. Topologically, residues glutamate 217–arginine 285 are cytoplasmic. A helical transmembrane segment spans residues phenylalanine 286 to tyrosine 306. At tyrosine 307 to threonine 327 the chain is on the extracellular side. A helical transmembrane segment spans residues glycine 328 to valine 349. Residues glycine 350–arginine 352 lie on the Cytoplasmic side of the membrane. A helical membrane pass occupies residues arginine 353–isoleucine 373. Residues lysine 374–threonine 389 are Extracellular-facing. Residues serine 390–tryptophan 410 traverse the membrane as a helical segment. The Cytoplasmic portion of the chain corresponds to asparagine 411–alanine 435. A helical membrane pass occupies residues alanine 436–methionine 456. The Extracellular segment spans residues glutamate 457–tyrosine 458. The chain crosses the membrane as a helical span at residues glycine 459–isoleucine 479. Residues proline 480 to valine 536 are Cytoplasmic-facing. The segment covering proline 516–threonine 530 has biased composition (basic and acidic residues). The interval proline 516 to valine 536 is disordered.

This sequence belongs to the major facilitator superfamily. Sugar transporter (TC 2.A.1.1) family.

It is found in the membrane. The sequence is that of Quinate permease (qa-y) from Neurospora terricola.